Here is a 211-residue protein sequence, read N- to C-terminus: Uracil phosphoribosyltransferase (211 aa).

5-phospho-alpha-D-ribose 1-diphosphate contacts are provided by residues arginine 81, arginine 106, and 133–141 (DPMLATGNS). Uracil-binding positions include isoleucine 196 and 201–203 (GDA). 5-phospho-alpha-D-ribose 1-diphosphate is bound at residue aspartate 202.

Belongs to the UPRTase family. Requires Mg(2+) as cofactor.

It catalyses the reaction UMP + diphosphate = 5-phospho-alpha-D-ribose 1-diphosphate + uracil. It participates in pyrimidine metabolism; UMP biosynthesis via salvage pathway; UMP from uracil: step 1/1. Its activity is regulated as follows. Allosterically activated by GTP. In terms of biological role, catalyzes the conversion of uracil and 5-phospho-alpha-D-ribose 1-diphosphate (PRPP) to UMP and diphosphate. This Myxococcus xanthus (strain DK1622) protein is Uracil phosphoribosyltransferase.